The chain runs to 757 residues: MEQANEKEEEERHEEAAGEKESFEESKEKAAEMSRKEKRKAMKKLKRKQVRKEIAAKEREEAKAKLNDPAEQERLKAIEEEDARRREKELKDFEESERAWREAMEIKRKKEEEEEAKREEEERRWKDLEELRKLEASGNDECGEDEDGEYEYIEEGPPEIIFQGNEIILKKNKVRVPKKSVVQVDGHESSNAEFVLQISDRPTSNPLPPGSEASANYQNVSSAQQILESVAQEVPNFGTEQDKAHCPFHLKTGACRFGQRCSRVHFYPNKSCTLLMKNMYNGPGITWEQDEGLEYTDEEAELCYEEFYEDVHTEFLKYGELVNFKVCRNGSFHLKGNVYVHYRSLESAILAYQSINGRYFAGKQVNCEFVNISRWKVAICGEYMKSRLKTCSRGSACNFIHCFRNPGGDYEWADHDRPPPRFWIHKMTSLFGYSDEKHMEHESSGSLNDSISDLSTDSHRQPSRRSRSRDHDHANVGSTPSYRSRKYHGDTQDSTREDKLRRHAENCHDGDDSPSRDGSLEREMYKERRYAKDTLHRDSRWSEHSPGHRVGRKRIHGRYSDDDSADGDDYGRRGTGHKRKPRRGTDSGVQEQMDNEKDRKTHRSSRKHSREGSSADKEEGHEHDRVHTVSDKSHRERSKHRHERSSSRYSHEEDSTESRHHQHKESDKKRSVETSPVGYQSDKDRDRSKQRQRYKSDDPESDQSRKGKRQSEENSDRETHKERRHRHRKRRRTQNSDDQNPKESEEVEEEIERWRPV.

The segment at 1–127 (MEQANEKEEE…REEEERRWKD (127 aa)) is disordered. Basic and acidic residues predominate over residues 13–35 (HEEAAGEKESFEESKEKAAEMSR). The segment covering 36 to 50 (KEKRKAMKKLKRKQV) has biased composition (basic residues). The span at 51–127 (RKEIAAKERE…REEEERRWKD (77 aa)) shows a compositional bias: basic and acidic residues. The segment at 240–268 (EQDKAHCPFHLKTGACRFGQRCSRVHFYP) adopts a C3H1-type 1 zinc-finger fold. One can recognise an RRM domain in the interval 295–372 (YTDEEAELCY…KQVNCEFVNI (78 aa)). The C3H1-type 2 zinc-finger motif lies at 374 to 404 (RWKVAICGEYMKSRLKTCSRGSACNFIHCFR). The interval 441–757 (HESSGSLNDS…EEEIERWRPV (317 aa)) is disordered. Residues 444-455 (SGSLNDSISDLS) are compositionally biased toward polar residues. Basic and acidic residues predominate over residues 487–546 (YHGDTQDSTREDKLRRHAENCHDGDDSPSRDGSLEREMYKERRYAKDTLHRDSRWSEHSP). Basic residues-rich tracts occupy residues 547–557 (GHRVGRKRIHG) and 600–609 (KTHRSSRKHS). Composition is skewed to basic and acidic residues over residues 610-634 (REGS…DKSH), 644-672 (RSSS…KRSV), and 681-721 (SDKD…ETHK). Residues 722–733 (ERRHRHRKRRRT) are compositionally biased toward basic residues.

The protein is Zinc finger CCCH domain-containing protein 5 of Arabidopsis thaliana (Mouse-ear cress).